We begin with the raw amino-acid sequence, 254 residues long: K88 minor fimbrial subunit FaeI (254 aa).

The signal sequence occupies residues 1–20; that stretch reads MKKVTLFLFVVSLLPSTVLA.

The protein belongs to the fimbrial K88 protein family.

It is found in the fimbrium. Its function is as follows. K88 minor fimbrial subunit, plays an essential role in the biogenesis of the K88 fimbriae. Fimbriae (also called pili), are polar filaments radiating from the surface of the bacterium to a length of 0.5-1.5 micrometers and numbering 100-300 per cell. They enable bacteria to colonize the epithelium of specific host organs. The protein is K88 minor fimbrial subunit FaeI (faeI) of Escherichia coli.